We begin with the raw amino-acid sequence, 934 residues long: Glycine dehydrogenase (decarboxylating) (934 aa).

K687 is modified (N6-(pyridoxal phosphate)lysine).

Belongs to the GcvP family. The glycine cleavage system is composed of four proteins: P, T, L and H. Pyridoxal 5'-phosphate is required as a cofactor.

It carries out the reaction N(6)-[(R)-lipoyl]-L-lysyl-[glycine-cleavage complex H protein] + glycine + H(+) = N(6)-[(R)-S(8)-aminomethyldihydrolipoyl]-L-lysyl-[glycine-cleavage complex H protein] + CO2. Its function is as follows. The glycine cleavage system catalyzes the degradation of glycine. The P protein binds the alpha-amino group of glycine through its pyridoxal phosphate cofactor; CO(2) is released and the remaining methylamine moiety is then transferred to the lipoamide cofactor of the H protein. The polypeptide is Glycine dehydrogenase (decarboxylating) (Nocardia farcinica (strain IFM 10152)).